A 286-amino-acid polypeptide reads, in one-letter code: 4-diphosphocytidyl-2-C-methyl-D-erythritol kinase (286 aa).

Residue Lys-13 is part of the active site. Residue 101 to 111 (PQGAGLGGGSS) coordinates ATP. The active site involves Asp-143.

The protein belongs to the GHMP kinase family. IspE subfamily.

It catalyses the reaction 4-CDP-2-C-methyl-D-erythritol + ATP = 4-CDP-2-C-methyl-D-erythritol 2-phosphate + ADP + H(+). It participates in isoprenoid biosynthesis; isopentenyl diphosphate biosynthesis via DXP pathway; isopentenyl diphosphate from 1-deoxy-D-xylulose 5-phosphate: step 3/6. Functionally, catalyzes the phosphorylation of the position 2 hydroxy group of 4-diphosphocytidyl-2C-methyl-D-erythritol. This Idiomarina loihiensis (strain ATCC BAA-735 / DSM 15497 / L2-TR) protein is 4-diphosphocytidyl-2-C-methyl-D-erythritol kinase.